A 692-amino-acid polypeptide reads, in one-letter code: Protein hook (692 aa).

In terms of domain architecture, Calponin-homology (CH) spans 6–123; sequence SEMYYSLLEW…RLLQLVLGCA (118 aa). Residues 135 to 576 are a coiled coil; the sequence is EIMGLEEELQ…YQSKVIQLET (442 aa). Residues 161 to 180 form a disordered region; the sequence is AGERSPSSSASGGAGSGGAV.

The protein belongs to the hook family. In terms of assembly, homodimer. Interacts with microtubules via its N-terminus.

It is found in the cytoplasm. Its subcellular location is the cytoskeleton. The protein localises to the endosome. The protein resides in the synapse. Functionally, involved in endocytic trafficking by stabilizing organelles of the endocytic pathway. Probably acts as a cytoskeletal linker protein required to tether endosome vesicles to the cytoskeleton. Involved in modulation of endocytosis at stages required for down-regulation of membrane proteins that control synapse size. Not involved in synaptic vesicle recycling. Required in R7 cells for boss endocytosis into multivesicular bodies (MVBs). Has a role in regulating adult longevity. This chain is Protein hook, found in Drosophila willistoni (Fruit fly).